The chain runs to 213 residues: Redox-sensing transcriptional repressor Rex (213 aa).

The segment at residues 18–57 is a DNA-binding region (H-T-H motif); it reads LYYRFVNTLKSKGIDRVNSKAISEGLNIDSATIRRDFSYF. 92–97 serves as a coordination point for NAD(+); that stretch reads GVGNLG.

This sequence belongs to the transcriptional regulatory Rex family. As to quaternary structure, homodimer.

It is found in the cytoplasm. Functionally, modulates transcription in response to changes in cellular NADH/NAD(+) redox state. The protein is Redox-sensing transcriptional repressor Rex of Staphylococcus saprophyticus subsp. saprophyticus (strain ATCC 15305 / DSM 20229 / NCIMB 8711 / NCTC 7292 / S-41).